The chain runs to 991 residues: Bone morphogenetic protein 1 (991 aa).

A signal peptide spans 1 to 25 (MPGVARPPLPLLSLPLLLLLLLLPR). Residues 26–125 (AGRPLDLADY…RWRGRPRSRR (100 aa)) constitute a propeptide that is removed on maturation. The segment at 86-131 (ARRPSIKAAGNSSALGGQGTSGQPQRESRGRWRGRPRSRRAATSRP) is disordered. Over residues 95–110 (GNSSALGGQGTSGQPQ) the composition is skewed to polar residues. Residue Asn96 is glycosylated (N-linked (GlcNAc...) asparagine). A compositionally biased stretch (basic residues) spans 116–127 (RWRGRPRSRRAA). In terms of domain architecture, Peptidase M12A spans 126-325 (AATSRPERVW…AQARKLYKCP (200 aa)). N-linked (GlcNAc...) asparagine glycosylation is present at Asn147. Intrachain disulfides connect Cys168–Cys324, Cys188–Cys210, Cys190–Cys191, and Cys327–Cys353. His218 is a binding site for Zn(2+). Residue Glu219 is part of the active site. His222 and His228 together coordinate Zn(2+). 2 consecutive CUB domains span residues 327 to 439 (CGET…YEAI) and 440 to 551 (CGGD…NFFK). N-linked (GlcNAc...) asparagine glycans are attached at residues Asn337 and Asn368. 15 disulfides stabilise this stretch: Cys380-Cys402, Cys440-Cys466, Cys493-Cys515, Cys556-Cys568, Cys564-Cys577, Cys579-Cys592, Cys596-Cys622, Cys649-Cys671, Cys712-Cys723, Cys719-Cys732, Cys734-Cys747, Cys752-Cys778, Cys805-Cys827, Cys865-Cys895, and Cys922-Cys944. The EGF-like 1; calcium-binding domain occupies 552-593 (EVDECSRPNRGGCEQRCLNTLGSYKCSCDPGYELAPDKRRCE). A CUB 3 domain is found at 596-707 (CGGFLTKLNG…KKGFKAHFFS (112 aa)). Asn604 carries N-linked (GlcNAc...) asparagine glycosylation. The region spanning 708–748 (DKDECSKDNGGCQQDCVNTFGSYECQCRSGFVLHDNKHDCK) is the EGF-like 2; calcium-binding domain. CUB domains are found at residues 752–864 (CEHK…HSTE) and 865–981 (CGGQ…YTST). Omega-N-methylarginine is present on residues Arg939 and Arg942.

As to quaternary structure, interacts with POSTN, the interaction promotes deposition on the extracellular matrix. The cofactor is Zn(2+). As to expression, at high levels in embryonic maternal deciduum and floor plate region of the neural tube. Less in developing membranous and endochondral bone, submucosa of intestine, dermis of skin and the mesenchyme of spleen and lung.

The protein localises to the golgi apparatus. It is found in the trans-Golgi network. The protein resides in the secreted. It localises to the extracellular space. Its subcellular location is the extracellular matrix. The enzyme catalyses Cleavage of the C-terminal propeptide at Ala-|-Asp in type I and II procollagens and at Arg-|-Asp in type III.. Activity is increased by the procollagen C-endopeptidase enhancer protein. Metalloprotease that plays key roles in regulating the formation of the extracellular matrix (ECM) via processing of various precursor proteins into mature functional enzymes or structural proteins. Thereby participates in several developmental and physiological processes such as cartilage and bone formation, muscle growth and homeostasis, wound healing and tissue repair. Roles in ECM formation include cleavage of the C-terminal propeptides from procollagens such as procollagen I, II and III or the proteolytic activation of the enzyme lysyl oxidase LOX, necessary to formation of covalent cross-links in collagen and elastic fibers. Additional substrates include matricellular thrombospondin-1/THBS1 whose cleavage leads to cell adhesion disruption and TGF-beta activation. This Mus musculus (Mouse) protein is Bone morphogenetic protein 1 (Bmp1).